The sequence spans 344 residues: MGLKEDLKALEEEAKKLIEEASDIGKLNDIRVNYLGKKGKIKSILKTLGKLSPEERKEIGQLANRIKDELEEALKEKTELLKKKALEEELRKNRIDITLPPQWIESGSSHPVISTLIEISQIFISMGFSVAEGPEVEKEKYNFDMLNIPPDHPARDMQDTFFLNNGDILRTHTSPVQIRTMLKHKPPIAVIAPGRVYRKDADPTHSPMFHQIEGLLVDRDVTFRDLKGILKIFLESVFGKDTKIRFRPSYFPFTEPSAEVDIGCTVCGGKGCRVCKGTGWLEILGCGMVDPEVFKAVGIDPEEYTGFAFGLGIERIAMLKYRITDIRLLFTGDMRFNQQFKGIR.

E255 contacts Mg(2+).

Belongs to the class-II aminoacyl-tRNA synthetase family. Phe-tRNA synthetase alpha subunit type 1 subfamily. As to quaternary structure, tetramer of two alpha and two beta subunits. Requires Mg(2+) as cofactor.

It localises to the cytoplasm. The catalysed reaction is tRNA(Phe) + L-phenylalanine + ATP = L-phenylalanyl-tRNA(Phe) + AMP + diphosphate + H(+). The polypeptide is Phenylalanine--tRNA ligase alpha subunit (Persephonella marina (strain DSM 14350 / EX-H1)).